The following is a 96-amino-acid chain: UPF0235 protein Tola_0962 (96 aa).

Belongs to the UPF0235 family.

The sequence is that of UPF0235 protein Tola_0962 from Tolumonas auensis (strain DSM 9187 / NBRC 110442 / TA 4).